The chain runs to 338 residues: Envelope glycoprotein K (338 aa).

The first 30 residues, 1–30 (MLAVRSLQHLTTVIFITAYGLVLAWYIVFG), serve as a signal peptide directing secretion. At 31–121 (ASPLHRCIYA…VNCLEALWDT (91 aa)) the chain is on the extracellular side. The involved in fusion stretch occupies residues 31–121 (ASPLHRCIYA…VNCLEALWDT (91 aa)). 2 N-linked (GlcNAc...) asparagine; by host glycosylation sites follow: asparagine 48 and asparagine 58. Residues 122–140 (QMRLVVVGWFLYLAFVALH) form a helical membrane-spanning segment. Residues 141–212 (QRRCMFGVVS…DPVTFLYHRP (72 aa)) are Cytoplasmic-facing. A helical membrane pass occupies residues 213–233 (AIGVIVGCELLLRFVALGLIV). Over 234-243 (GTALISRGAC) the chain is Extracellular. The helical transmembrane segment at 244–264 (AITHPLFLTITTWCFVSIIAL) threads the bilayer. Residues 265-301 (TELYFILRRGSAPKNAEPAAPRGRSKGWSGVCGRCCS) lie on the Cytoplasmic side of the membrane. The segment at 265–301 (TELYFILRRGSAPKNAEPAAPRGRSKGWSGVCGRCCS) is interaction with UL20. Residues 302-322 (IILSGIAVRLCYIAVVAGVVL) form a helical membrane-spanning segment. Over 323–338 (VALRYEQEIQRRLFDL) the chain is Extracellular.

Belongs to the alphaherpesvirinae glycoprotein K family. As to quaternary structure, interacts (via UL20 interaction region) with protein UL20 (via N-terminus); this interaction probably plays a role in the coordinate transport of protein UL20 and gK to the trans-Golgi network (TGN), and is required for the cell surface expression of gK. N-glycosylated.

Its subcellular location is the host cell membrane. It localises to the host endosome membrane. The protein localises to the host Golgi apparatus membrane. Glycoprotein that probably modulates membrane fusion events during secondary envelopment of cytoplasmic capsids that bud into specific trans-Golgi network (TGN)-derived membranes. Also plays a role, together with gB, in virus-induced cell-to-cell fusion (syncytia formation). Seems to block fusion of virions with infected-cell membranes. This is Envelope glycoprotein K (gK) from Human herpesvirus 2 (strain HG52) (HHV-2).